The sequence spans 578 residues: MSALRVSVDRIHPEGRCAMTEPQRRFGGGGERDARHLTALEEQLGAARTRLAQVSAQNDRLATTLREARDQIVALKAEVDRLGQPPAQFATFLEATGEGTADIVSAGRRMRVAVSPAIDLATLRPGQDVMVNEAMNVVAAFDYERTGELASVKEVLPDGRVLVLARADEERVVRLAGPLLDGPLRVGDSLTVDTRSGFAFERIPKAEVEELVLEEVPDIDYEDIGGLGPQIEAIRDAVELPFLHADLFREHGLRPPKGILLYGPPGCGKTLIAKAVANSLAKKAAELRGESQAKSYFLNIKGPELLNKYVGETERHIRLIFARAREKASGGTPVVVFFDEMESLFRTRGSGVSSDVETTIVPQLLSELDGVERLENVIVIGASNREDMIDPAILRPGRLDVKIKIERPDAESAGQIFAKYLTPDLPLHAEDVAVNGGTKQATVDAMIRATVERMYTETEENEFLEVTYAGGDKEVLYYKDFNSGAMIQNIVDRAKKMAIKDLLTLGQKGVRVDHLMSACVDEFKENEDLPNTTNPDDWARISGKKGERIVFIRTLMQGKKGTEAGRSIDTVANTGQYL.

Positions 35–84 (RHLTALEEQLGAARTRLAQVSAQNDRLATTLREARDQIVALKAEVDRLGQ) form a coiled coil. 266 to 271 (GCGKTL) provides a ligand contact to ATP. The segment at 577–578 (YL) is docks into pockets in the proteasome alpha-ring.

This sequence belongs to the AAA ATPase family. As to quaternary structure, homohexamer. Assembles into a hexameric ring structure that caps the 20S proteasome core. Strongly interacts with the prokaryotic ubiquitin-like protein Pup through a hydrophobic interface; the interacting region of ARC lies in its N-terminal coiled-coil domain. There is one Pup binding site per ARC hexamer ring. Upon ATP-binding, the C-terminus of ARC interacts with the alpha-rings of the proteasome core, possibly by binding to the intersubunit pockets.

Its pathway is protein degradation; proteasomal Pup-dependent pathway. ATPase which is responsible for recognizing, binding, unfolding and translocation of pupylated proteins into the bacterial 20S proteasome core particle. May be essential for opening the gate of the 20S proteasome via an interaction with its C-terminus, thereby allowing substrate entry and access to the site of proteolysis. Thus, the C-termini of the proteasomal ATPase may function like a 'key in a lock' to induce gate opening and therefore regulate proteolysis. This chain is Proteasome-associated ATPase, found in Kineococcus radiotolerans (strain ATCC BAA-149 / DSM 14245 / SRS30216).